The chain runs to 256 residues: Triosephosphate isomerase (256 aa).

9-11 (NWK) provides a ligand contact to substrate. H95 serves as the catalytic Electrophile. Catalysis depends on E167, which acts as the Proton acceptor. Substrate-binding positions include G173, S213, and 234 to 235 (GG).

This sequence belongs to the triosephosphate isomerase family. As to quaternary structure, homodimer.

Its subcellular location is the cytoplasm. The enzyme catalyses D-glyceraldehyde 3-phosphate = dihydroxyacetone phosphate. The protein operates within carbohydrate biosynthesis; gluconeogenesis. It functions in the pathway carbohydrate degradation; glycolysis; D-glyceraldehyde 3-phosphate from glycerone phosphate: step 1/1. In terms of biological role, involved in the gluconeogenesis. Catalyzes stereospecifically the conversion of dihydroxyacetone phosphate (DHAP) to D-glyceraldehyde-3-phosphate (G3P). The chain is Triosephosphate isomerase from Symbiobacterium thermophilum (strain DSM 24528 / JCM 14929 / IAM 14863 / T).